The sequence spans 337 residues: CMP-sialic acid transporter (337 aa).

At 1 to 9 (MAAPRDNVT) the chain is on the cytoplasmic side. Residues 10 to 30 (LLFKLYCLAVMTLMAAVYTIA) form a helical membrane-spanning segment. At 31–45 (LRYTRTSDKELYFST) the chain is on the lumenal side. The chain crosses the membrane as a helical span at residues 46–64 (TAVCITEVIKLLLSVGILA). Lysine 55 lines the CMP-N-acetyl-beta-neuraminate pocket. Topologically, residues 65-87 (KETGSLGRFKASLRENVLGSPKE) are cytoplasmic. Residues 88 to 108 (LLKLSVPSLVYAVQNNMAFLA) traverse the membrane as a helical segment. CMP-N-acetyl-beta-neuraminate is bound at residue 101–102 (QN). At 109-114 (LSNLDA) the chain is on the lumenal side. A helical membrane pass occupies residues 115–135 (AVYQVTYQLKIPCTALCTVLM). 117–124 (YQVTYQLK) is a binding site for CMP-N-acetyl-beta-neuraminate. Residues 136-141 (LNRTLS) are Cytoplasmic-facing. The chain crosses the membrane as a helical span at residues 142–160 (KLQWVSVFMLCAGVTLVQW). Residues 161–175 (KPAQATKVVVEQNPL) are Lumenal-facing. A helical membrane pass occupies residues 176-196 (LGFGAIAIAVLCSGFAGVYFE). Serine 188 contacts CMP-N-acetyl-beta-neuraminate. The Cytoplasmic portion of the chain corresponds to 197–209 (KVLKSSDTSLWVR). 210–214 (NIQMY) is a CMP-N-acetyl-beta-neuraminate binding site. Residues 210 to 228 (NIQMYLSGIIVTLAGVYLS) form a helical membrane-spanning segment. At 229-243 (DGAEIKEKGFFYGYT) the chain is on the lumenal side. Residues 244-262 (YYVWFVIFLASVGGLYTSV) form a helical membrane-spanning segment. Over 263 to 269 (VVKYTDN) the chain is Cytoplasmic. The chain crosses the membrane as a helical span at residues 270-288 (IMKGFSAAAAIVLSTIASV). Lysine 272 is a CMP-N-acetyl-beta-neuraminate binding site. At 289–296 (MLFGLQIT) the chain is on the lumenal side. The helical transmembrane segment at 297–315 (LTFALGTLLVCVSIYLYGL) threads the bilayer. Residues 316–337 (PRQDTTSIQQGETASKERVIGV) are Cytoplasmic-facing. The disordered stretch occupies residues 316-337 (PRQDTTSIQQGETASKERVIGV).

Belongs to the nucleotide-sugar transporter family. SLC35A subfamily. In terms of assembly, monomer.

Its subcellular location is the golgi apparatus membrane. It localises to the golgi apparatus. The enzyme catalyses CMP-N-acetyl-beta-neuraminate(in) + CMP(out) = CMP-N-acetyl-beta-neuraminate(out) + CMP(in). It catalyses the reaction CMP-N-acetyl-beta-neuraminate(in) + AMP(out) = CMP-N-acetyl-beta-neuraminate(out) + AMP(in). The catalysed reaction is CDP-L-ribitol(in) + CDP(out) = CDP-L-ribitol(out) + CDP(in). It carries out the reaction UMP(out) + CMP-N-acetyl-beta-neuraminate(in) = UMP(in) + CMP-N-acetyl-beta-neuraminate(out). Functionally, transports CMP-sialic acid from the cytosol into the Golgi apparatus, functioning as an antiporter that exchanges CMP-sialic acid for CMP. Binds both CMP-sialic acid and free CMP, but has higher affinity for free CMP. Also able to exchange CMP-sialic acid for AMP and UMP. Also mediates the transport of CDP-ribitol. This Homo sapiens (Human) protein is CMP-sialic acid transporter.